The sequence spans 407 residues: Polygalacturonase (407 aa).

A signal peptide spans 1-26 (MAPHLNIVPSMFVLLLLFISASKVQS). 2 PbH1 repeats span residues 180–206 (CKNI…HMGK) and 207–228 (SEGV…SIGD). N182 is a glycosylation site (N-linked (GlcNAc...) asparagine). D221 functions as the Proton donor in the catalytic mechanism. C223 and C240 are disulfide-bonded. The active site involves H244. 2 PbH1 repeats span residues 260 to 281 (VEGI…RIKT) and 290 to 311 (VSEI…LIDQ). 4 N-linked (GlcNAc...) asparagine glycosylation sites follow: N267, N272, N302, and N331. Disulfide bonds link C351–C357 and C379–C395. Residues 357-384 (CQNVELADIDIKHNGAEPATSQCLNVKP) form a PbH1 5 repeat.

Belongs to the glycosyl hydrolase 28 family. As to expression, pollen.

The protein resides in the secreted. The protein localises to the cell wall. It carries out the reaction (1,4-alpha-D-galacturonosyl)n+m + H2O = (1,4-alpha-D-galacturonosyl)n + (1,4-alpha-D-galacturonosyl)m.. May function in the depolymerization of the pectin in its walls during pollen tube elongation, or in that of the pistil during pollination. This chain is Polygalacturonase (G9), found in Gossypium hirsutum (Upland cotton).